The chain runs to 318 residues: Biotin synthase (318 aa).

The Radical SAM core domain occupies 40–260 (DDIQKASLLS…VATARIIMPL (221 aa)). 3 residues coordinate [4Fe-4S] cluster: Cys-55, Cys-59, and Cys-62. Residues Cys-100, Cys-132, Cys-192, and Arg-264 each contribute to the [2Fe-2S] cluster site.

This sequence belongs to the radical SAM superfamily. Biotin synthase family. In terms of assembly, homodimer. The cofactor is [4Fe-4S] cluster. It depends on [2Fe-2S] cluster as a cofactor.

The enzyme catalyses (4R,5S)-dethiobiotin + (sulfur carrier)-SH + 2 reduced [2Fe-2S]-[ferredoxin] + 2 S-adenosyl-L-methionine = (sulfur carrier)-H + biotin + 2 5'-deoxyadenosine + 2 L-methionine + 2 oxidized [2Fe-2S]-[ferredoxin]. It functions in the pathway cofactor biosynthesis; biotin biosynthesis; biotin from 7,8-diaminononanoate: step 2/2. Functionally, catalyzes the conversion of dethiobiotin (DTB) to biotin by the insertion of a sulfur atom into dethiobiotin via a radical-based mechanism. The protein is Biotin synthase of Ruegeria pomeroyi (strain ATCC 700808 / DSM 15171 / DSS-3) (Silicibacter pomeroyi).